The sequence spans 488 residues: Bifunctional protein GlmU (488 aa).

The tract at residues 1–237 (MPRTRTPLAA…AEEASGVNDR (237 aa)) is pyrophosphorylase. Residues 13 to 16 (LAAG), Lys-27, Gln-82, 87 to 88 (GT), 110 to 112 (SGD), Gly-149, Glu-164, Asn-179, and Asn-235 each bind UDP-N-acetyl-alpha-D-glucosamine. Asp-112 is a binding site for Mg(2+). Asn-235 contributes to the Mg(2+) binding site. The tract at residues 238–258 (IELARANRVMVGRLAEAFMRA) is linker. An N-acetyltransferase region spans residues 259–488 (GVTIEDPARF…KGRPAARRAS (230 aa)). Arg-341 and Lys-359 together coordinate UDP-N-acetyl-alpha-D-glucosamine. Residue His-371 is the Proton acceptor of the active site. Tyr-374 and Asn-385 together coordinate UDP-N-acetyl-alpha-D-glucosamine. Residues Ala-388, 394-395 (NY), Ser-413, Ala-431, and Arg-448 contribute to the acetyl-CoA site. Positions 459–488 (AQRQAEKQMKGTATGPAPARKGRPAARRAS) are disordered. Positions 478-488 (RKGRPAARRAS) are enriched in basic residues.

This sequence in the N-terminal section; belongs to the N-acetylglucosamine-1-phosphate uridyltransferase family. The protein in the C-terminal section; belongs to the transferase hexapeptide repeat family. In terms of assembly, homotrimer. Mg(2+) serves as cofactor.

It is found in the cytoplasm. The enzyme catalyses alpha-D-glucosamine 1-phosphate + acetyl-CoA = N-acetyl-alpha-D-glucosamine 1-phosphate + CoA + H(+). It catalyses the reaction N-acetyl-alpha-D-glucosamine 1-phosphate + UTP + H(+) = UDP-N-acetyl-alpha-D-glucosamine + diphosphate. It functions in the pathway nucleotide-sugar biosynthesis; UDP-N-acetyl-alpha-D-glucosamine biosynthesis; N-acetyl-alpha-D-glucosamine 1-phosphate from alpha-D-glucosamine 6-phosphate (route II): step 2/2. It participates in nucleotide-sugar biosynthesis; UDP-N-acetyl-alpha-D-glucosamine biosynthesis; UDP-N-acetyl-alpha-D-glucosamine from N-acetyl-alpha-D-glucosamine 1-phosphate: step 1/1. Its pathway is bacterial outer membrane biogenesis; LPS lipid A biosynthesis. Its function is as follows. Catalyzes the last two sequential reactions in the de novo biosynthetic pathway for UDP-N-acetylglucosamine (UDP-GlcNAc). The C-terminal domain catalyzes the transfer of acetyl group from acetyl coenzyme A to glucosamine-1-phosphate (GlcN-1-P) to produce N-acetylglucosamine-1-phosphate (GlcNAc-1-P), which is converted into UDP-GlcNAc by the transfer of uridine 5-monophosphate (from uridine 5-triphosphate), a reaction catalyzed by the N-terminal domain. This chain is Bifunctional protein GlmU, found in Anaeromyxobacter dehalogenans (strain 2CP-C).